The chain runs to 521 residues: GMP synthase [glutamine-hydrolyzing] (521 aa).

Residues 10–204 form the Glutamine amidotransferase type-1 domain; the sequence is SLLILDFGSQ…ALGICGCEND (195 aa). Cysteine 87 (nucleophile) is an active-site residue. Catalysis depends on residues histidine 178 and glutamate 180. In terms of domain architecture, GMPS ATP-PPase spans 205-396; that stretch reads WNMHNFAEEQ…LGMPREMLMR (192 aa). 232 to 238 lines the ATP pocket; it reads SGGVDSS.

Homodimer.

It carries out the reaction XMP + L-glutamine + ATP + H2O = GMP + L-glutamate + AMP + diphosphate + 2 H(+). It functions in the pathway purine metabolism; GMP biosynthesis; GMP from XMP (L-Gln route): step 1/1. Its function is as follows. Catalyzes the synthesis of GMP from XMP. The sequence is that of GMP synthase [glutamine-hydrolyzing] from Wolinella succinogenes (strain ATCC 29543 / DSM 1740 / CCUG 13145 / JCM 31913 / LMG 7466 / NCTC 11488 / FDC 602W) (Vibrio succinogenes).